We begin with the raw amino-acid sequence, 366 residues long: 3-dehydroquinate synthase (366 aa).

NAD(+) contacts are provided by residues 107-111 (GVIGD), 131-132 (TT), Lys-144, and Lys-153. Residues Glu-186, His-251, and His-268 each contribute to the Zn(2+) site.

Belongs to the sugar phosphate cyclases superfamily. Dehydroquinate synthase family. Co(2+) serves as cofactor. Zn(2+) is required as a cofactor. The cofactor is NAD(+).

Its subcellular location is the cytoplasm. It carries out the reaction 7-phospho-2-dehydro-3-deoxy-D-arabino-heptonate = 3-dehydroquinate + phosphate. The protein operates within metabolic intermediate biosynthesis; chorismate biosynthesis; chorismate from D-erythrose 4-phosphate and phosphoenolpyruvate: step 2/7. Its function is as follows. Catalyzes the conversion of 3-deoxy-D-arabino-heptulosonate 7-phosphate (DAHP) to dehydroquinate (DHQ). The polypeptide is 3-dehydroquinate synthase (Microcystis aeruginosa (strain NIES-843 / IAM M-2473)).